Consider the following 336-residue polypeptide: Probable allantoicase 2 (336 aa).

Belongs to the allantoicase family.

It catalyses the reaction allantoate + H2O = (S)-ureidoglycolate + urea. The protein operates within nitrogen metabolism; (S)-allantoin degradation; (S)-ureidoglycolate from allantoate (aminidohydrolase route): step 1/1. The sequence is that of Probable allantoicase 2 from Burkholderia pseudomallei (strain K96243).